The primary structure comprises 235 residues: Small ribosomal subunit protein uS2c (235 aa).

This sequence belongs to the universal ribosomal protein uS2 family.

The protein localises to the plastid. It is found in the chloroplast. The sequence is that of Small ribosomal subunit protein uS2c (rps2) from Zygnema circumcarinatum (Green alga).